The following is a 143-amino-acid chain: Large-conductance mechanosensitive channel (143 aa).

2 helical membrane-spanning segments follow: residues 10–30 (FAVK…GAFS) and 89–109 (GSFI…FLMV).

The protein belongs to the MscL family. As to quaternary structure, homopentamer.

The protein localises to the cell inner membrane. Functionally, channel that opens in response to stretch forces in the membrane lipid bilayer. May participate in the regulation of osmotic pressure changes within the cell. The chain is Large-conductance mechanosensitive channel from Burkholderia cenocepacia (strain HI2424).